The primary structure comprises 572 residues: Methionine--tRNA ligase (572 aa).

The short motif at 11–21 is the 'HIGH' region element; the sequence is PYINGIKHLGN. The Zn(2+) site is built by C143, C146, C156, and C159. Residues 346 to 350 carry the 'KMSKS' region motif; it reads QFSTS. T349 provides a ligand contact to ATP.

It belongs to the class-I aminoacyl-tRNA synthetase family. MetG type 1 subfamily. As to quaternary structure, monomer. Zn(2+) serves as cofactor.

The protein localises to the cytoplasm. The catalysed reaction is tRNA(Met) + L-methionine + ATP = L-methionyl-tRNA(Met) + AMP + diphosphate. Its function is as follows. Is required not only for elongation of protein synthesis but also for the initiation of all mRNA translation through initiator tRNA(fMet) aminoacylation. This is Methionine--tRNA ligase from Ruegeria pomeroyi (strain ATCC 700808 / DSM 15171 / DSS-3) (Silicibacter pomeroyi).